The following is a 394-amino-acid chain: Ceramide glucosyltransferase-B (394 aa).

Residues 1-10 lie on the Lumenal side of the membrane; that stretch reads MAVLDLALQG. A helical transmembrane segment spans residues 11 to 32; sequence LAIFGCILFFVLWFMHFLSIVY. Over 33–195 the chain is Cytoplasmic; that stretch reads TRLHLNKKVS…QVYFGTSHPR (163 aa). Asp-92 is a short sequence motif (D1). Position 144 (Asp-144) is a short sequence motif, D2. A helical transmembrane segment spans residues 196-215; it reads SYISANVTGIKCVTGMSCLM. Residues 216-287 are Lumenal-facing; sequence RKEVLDQAGG…KLRINMLPAT (72 aa). A short sequence motif (D3) is located at residue Asp-236. Asp-236 (proton acceptor) is an active-site residue. Positions 272–276 match the (Q/R)XXRW motif; sequence RMIRW. A helical transmembrane segment spans residues 288-304; that stretch reads IICEPISECFVASLIIG. Residues 305-309 lie on the Cytoplasmic side of the membrane; it reads WAAHH. Residues 310–328 form a helical membrane-spanning segment; the sequence is IFRWDIMVFFMCHCLAWFI. The Lumenal portion of the chain corresponds to 329 to 348; that stretch reads FDYIQLRGVQGGPLNFSKLD. The helical transmembrane segment at 349–369 threads the bilayer; the sequence is YAVAWFIRESMTIYIFLSALW. The Cytoplasmic portion of the chain corresponds to 370–394; it reads DPTISWRTGRYRLRCGGTAEEILDV.

It belongs to the glycosyltransferase 2 family.

The protein resides in the golgi apparatus membrane. It catalyses the reaction an N-acylsphing-4-enine + UDP-alpha-D-glucose = a beta-D-glucosyl-(1&lt;-&gt;1')-N-acylsphing-4-enine + UDP + H(+). The catalysed reaction is UDP-alpha-D-xylose + an N-acylsphing-4-enine = a beta-D-xylosyl-(1&lt;-&gt;1')-N-acylsphing-4-enine + UDP + H(+). The enzyme catalyses N-(9Z-octadecenoyl)-sphing-4-enine + UDP-alpha-D-xylose = beta-D-xylosyl-(1&lt;-&gt;1')-N-(9Z-octadecenoyl)-sphing-4-enine + UDP + H(+). Its pathway is lipid metabolism; sphingolipid metabolism. Its function is as follows. Participates in the initial step of the glucosylceramide-based glycosphingolipid/GSL synthetic pathway at the cytosolic surface of the Golgi. Catalyzes the transfer of glucose from UDP-glucose to ceramide to produce glucosylceramide/GlcCer (such as beta-D-glucosyl-(1&lt;-&gt;1')-N-acylsphing-4-enine). Glucosylceramide is the core component of glycosphingolipids/GSLs, amphipathic molecules consisting of a ceramide lipid moiety embedded in the outer leaflet of the membrane, linked to one of hundreds of different externally oriented oligosaccharide structures. Glycosphingolipids are essential components of membrane microdomains that mediate membrane trafficking and signal transduction. They are implicated in many fundamental cellular processes, including growth, differentiation, migration, morphogenesis, cell-to-cell and cell-to-matrix interactions. Catalyzes the synthesis of xylosylceramide/XylCer (such as beta-D-xylosyl-(1&lt;-&gt;1')-N-acylsphing-4-enine) using UDP-Xyl as xylose donor. In Xenopus laevis (African clawed frog), this protein is Ceramide glucosyltransferase-B (ugcg-b).